A 372-amino-acid chain; its full sequence is Pyrimidine monooxygenase RutA (372 aa).

FMN is bound by residues 57–58 (IK), Asn123, Glu132, 148–149 (RY), and Ser198.

It belongs to the NtaA/SnaA/DszA monooxygenase family. RutA subfamily.

The catalysed reaction is uracil + FMNH2 + NADH + O2 = (Z)-3-ureidoacrylate + FMN + NAD(+) + H2O + H(+). The enzyme catalyses thymine + FMNH2 + NADH + O2 = (Z)-2-methylureidoacrylate + FMN + NAD(+) + H2O + H(+). In terms of biological role, catalyzes the pyrimidine ring opening between N-3 and C-4 by an unusual flavin hydroperoxide-catalyzed mechanism, adding oxygen atoms in the process to yield ureidoacrylate peracid, that immediately reacts with FMN forming ureidoacrylate and FMN-N(5)-oxide. The FMN-N(5)-oxide reacts spontaneously with NADH to produce FMN. Requires the flavin reductase RutF to regenerate FMN in vivo. This Methylorubrum extorquens (strain PA1) (Methylobacterium extorquens) protein is Pyrimidine monooxygenase RutA.